We begin with the raw amino-acid sequence, 173 residues long: Calmodulin-like protein 11 (173 aa).

Low complexity predominate over residues 1 to 26 (MEEIQQQQQQQQQQQQQQQQQQQQQQ). A disordered region spans residues 1 to 27 (MEEIQQQQQQQQQQQQQQQQQQQQQQE). 4 consecutive EF-hand domains span residues 31–66 (EQIM…LDQN), 67–102 (PTEQ…QLQE), 104–139 (DADE…LGEK), and 140–173 (LTDE…MING). 20 residues coordinate Ca(2+): D44, D46, D48, C50, E55, D80, D82, N84, T86, E91, D117, D119, N121, Y123, E128, D153, D155, D157, Q159, and E164.

This sequence belongs to the calmodulin family.

Functionally, potential calcium sensor. This is Calmodulin-like protein 11 (CML11) from Arabidopsis thaliana (Mouse-ear cress).